A 282-amino-acid polypeptide reads, in one-letter code: Phenylethanolamine N-methyltransferase (282 aa).

Serine 7 is modified (phosphoserine). S-adenosyl-L-methionine contacts are provided by residues tyrosine 35, tyrosine 40, 79–80 (GS), tyrosine 85, aspartate 101, asparagine 106, 158–159 (DV), and alanine 181. Residues glutamate 219 and aspartate 267 each coordinate octopamine.

It carries out the reaction phenylethanolamine + S-adenosyl-L-methionine = N-methylphenylethanolamine + S-adenosyl-L-homocysteine + H(+). The catalysed reaction is (R)-noradrenaline + S-adenosyl-L-methionine = (R)-adrenaline + S-adenosyl-L-homocysteine + H(+). It catalyses the reaction (R)-normetanephrine + S-adenosyl-L-methionine = (R)-metanephrine + S-adenosyl-L-homocysteine + H(+). The enzyme catalyses (R)-octopamine + S-adenosyl-L-methionine = (R)-synephrine + S-adenosyl-L-homocysteine + H(+). The protein operates within catecholamine biosynthesis; (R)-adrenaline biosynthesis; (R)-adrenaline from (R)-noradrenaline: step 1/1. Inhibited by methyl methanethiosulfonate, phenylglyoxal, tetranitromethane and diethyl pyrocarbonate. Inhibited by 4-oxo-1,4-dihydro-quinoline-3,7-dicarboxylic acid, 4-(benzo[d][1,3]dioxol-5-ylamino)-4-oxobutanoic acid and 1,4-diaminonaphthalene-2,6-disulfonic acid. Catalyzes the transmethylation of nonepinephrine (noradrenaline) to form epinephrine (adrenaline), using S-adenosyl-L-methionine as the methyl donor. Other substrates include phenylethanolamine and octopamine. Also methylates normetanephrine. The protein is Phenylethanolamine N-methyltransferase (PNMT) of Homo sapiens (Human).